Consider the following 297-residue polypeptide: 4-hydroxy-tetrahydrodipicolinate synthase (297 aa).

Thr-55 contributes to the pyruvate binding site. Tyr-144 (proton donor/acceptor) is an active-site residue. The Schiff-base intermediate with substrate role is filled by Lys-172. Residue Ile-213 coordinates pyruvate.

The protein belongs to the DapA family. Homotetramer; dimer of dimers.

Its subcellular location is the cytoplasm. It catalyses the reaction L-aspartate 4-semialdehyde + pyruvate = (2S,4S)-4-hydroxy-2,3,4,5-tetrahydrodipicolinate + H2O + H(+). The protein operates within amino-acid biosynthesis; L-lysine biosynthesis via DAP pathway; (S)-tetrahydrodipicolinate from L-aspartate: step 3/4. In terms of biological role, catalyzes the condensation of (S)-aspartate-beta-semialdehyde [(S)-ASA] and pyruvate to 4-hydroxy-tetrahydrodipicolinate (HTPA). This is 4-hydroxy-tetrahydrodipicolinate synthase from Lactococcus lactis subsp. cremoris (strain MG1363).